Reading from the N-terminus, the 265-residue chain is uncharacterized protein (265 aa).

2 consecutive CBS domains span residues 9–64 (MTKK…EKVE) and 67–126 (MTKR…TTPK).

This is an uncharacterized protein from Methanocaldococcus jannaschii (strain ATCC 43067 / DSM 2661 / JAL-1 / JCM 10045 / NBRC 100440) (Methanococcus jannaschii).